Consider the following 131-residue polypeptide: M-zodatoxin-Lt8o (131 aa).

An N-terminal signal peptide occupies residues 1-20 (MKYFVVALALVAAFACIAES). Positions 21–60 (KPAESEHELAEVEEENELADLEDAVWLEHLADLSDLEEAR) are excised as a propeptide.

This sequence belongs to the cationic peptide 06 (cytoinsectotoxin) family. In terms of tissue distribution, expressed by the venom gland.

Its subcellular location is the secreted. Insecticidal, cytolytic and antimicrobial peptide. Forms voltage-dependent, ion-permeable channels in membranes. At high concentration causes cell membrane lysis. This Lachesana tarabaevi (Spider) protein is M-zodatoxin-Lt8o (cit 1-14).